A 283-amino-acid polypeptide reads, in one-letter code: Homeobox protein Hox-C12b (283 aa).

The homeobox DNA-binding region spans 215–274 (TRKKRKPYSKLQLNELEGEFILNEFITRQRRRELSDRLNLTDQQVKIWFQNRRMKKKRLL).

The protein belongs to the Abd-B homeobox family.

Its subcellular location is the nucleus. Functionally, sequence-specific transcription factor which is part of a developmental regulatory system that provides cells with specific positional identities on the anterior-posterior axis. The chain is Homeobox protein Hox-C12b (hoxc12b) from Danio rerio (Zebrafish).